The chain runs to 868 residues: Sporulation-specific protein 75 (868 aa).

The Extracellular segment spans residues 1-34 (MNATKELTFNLLNKFQDKERFGSAQRHAGISLKG). Residue N2 is glycosylated (N-linked (GlcNAc...) asparagine). The chain crosses the membrane as a helical span at residues 35–55 (FISGILFSFLYFLFQLSLFII). Residues 56-127 (LRSRFKTIYQ…DNYLFLRFLK (72 aa)) lie on the Cytoplasmic side of the membrane. The helical transmembrane segment at 128 to 148 (LLIFFFAVLSIINIPILIPIH) threads the bilayer. Residues 149–187 (YFSRDILKENEGERYEQSFRTTSKLDKWTMSNLSPNSSN) are Extracellular-facing. A glycan (N-linked (GlcNAc...) asparagine) is linked at N184. A helical transmembrane segment spans residues 188–208 (TLICHLFLSIFVVLWFHFILS). Residues 209–481 (SELRFVNRLG…AKYFSANILR (273 aa)) lie on the Cytoplasmic side of the membrane. Residues 482 to 502 (IFVIIGWILPVAFLGLISQIP) form a helical membrane-spanning segment. An N-linked (GlcNAc...) asparagine glycan is attached at N503. At 503–527 (NISSLIPFTKIIHFQSPFIREVAKN) the chain is on the extracellular side. Residues 528–548 (LIPIVTLIIIIEIVPYFFRWL) traverse the membrane as a helical segment. Over 549–569 (SYLRGLKTGAQIEADVQNWYF) the chain is Cytoplasmic. The chain crosses the membrane as a helical span at residues 570-590 (VFVFIHLFVVVTISSGFSIII). Residues 591–611 (ERLLNNPVSIPALLANDLPKC) are Extracellular-facing. A helical membrane pass occupies residues 612–632 (ANFFCSFVLIRGMAYAGGNLL). The Cytoplasmic portion of the chain corresponds to 633 to 660 (RIKELLFELFYYKWKRSTPHAQFKRLKT). The chain crosses the membrane as a helical span at residues 661-683 (SLFFQLGSIYPIFSVLGCIGIIY). At 684–692 (SVVAPIILL) the chain is on the extracellular side. A helical transmembrane segment spans residues 693–713 (LCCISFSMVFFSFSYLFKYQY). Over 714–730 (NKENYSETFGKLYIQAL) the chain is Cytoplasmic. The chain crosses the membrane as a helical span at residues 731–751 (MQLYAGIYFMEFCLLGLFTLF). The Extracellular portion of the chain corresponds to 752–753 (DQ). The helical transmembrane segment at 754-774 (YTLSTIMLVVFALTVITHSKI) threads the bilayer. Over 775–868 (SKQIKSKPQR…DCHLENSHLH (94 aa)) the chain is Cytoplasmic.

This sequence belongs to the CSC1 (TC 1.A.17) family.

Its subcellular location is the membrane. Acts as an osmosensitive calcium-permeable cation channel. Required for spore wall assembly and ascus formation. The chain is Sporulation-specific protein 75 (SPO75) from Saccharomyces cerevisiae (strain ATCC 204508 / S288c) (Baker's yeast).